The sequence spans 178 residues: MPMRSLVTLPDPILREVSKPVEQVDTALQELADDMLETMYHAKGIGLAAIQIGIPLRMLVIDVSGNAEDTQKKPLVIINPEILWLSDERNVYKEGCLSIPDYFAEVERPKRLRVRYQNREGKQKEIEADDLLATCLQHEIDHLDGRLFIDYISRIKRDMVIRKFKKRAKEKNTQEAVL.

Fe cation contacts are provided by Cys96 and His138. The active site involves Glu139. Residue His142 participates in Fe cation binding.

Belongs to the polypeptide deformylase family. It depends on Fe(2+) as a cofactor.

It catalyses the reaction N-terminal N-formyl-L-methionyl-[peptide] + H2O = N-terminal L-methionyl-[peptide] + formate. Its function is as follows. Removes the formyl group from the N-terminal Met of newly synthesized proteins. Requires at least a dipeptide for an efficient rate of reaction. N-terminal L-methionine is a prerequisite for activity but the enzyme has broad specificity at other positions. This Bartonella tribocorum (strain CIP 105476 / IBS 506) protein is Peptide deformylase.